Consider the following 216-residue polypeptide: Adenylate kinase (216 aa).

ATP is bound at residue 10–15 (GAGKGT). Residues 30-59 (STGDILRENVKKGTALGLKAKSYMDKGELV) are NMP. Residues threonine 31, arginine 36, 57 to 59 (ELV), 85 to 88 (GFPR), and glutamine 92 contribute to the AMP site. The tract at residues 126–163 (GRRICRSCGASYHLVFNPPKAKDLCDSCGGELYQRDDD) is LID. Residue arginine 127 participates in ATP binding. 2 residues coordinate Zn(2+): cysteine 130 and cysteine 133. Residue 136–137 (SY) participates in ATP binding. Zn(2+) contacts are provided by cysteine 150 and cysteine 153. Arginine 160 and arginine 171 together coordinate AMP. Lysine 199 lines the ATP pocket.

It belongs to the adenylate kinase family. Monomer.

It is found in the cytoplasm. The enzyme catalyses AMP + ATP = 2 ADP. It participates in purine metabolism; AMP biosynthesis via salvage pathway; AMP from ADP: step 1/1. Its function is as follows. Catalyzes the reversible transfer of the terminal phosphate group between ATP and AMP. Plays an important role in cellular energy homeostasis and in adenine nucleotide metabolism. The protein is Adenylate kinase of Methanocella arvoryzae (strain DSM 22066 / NBRC 105507 / MRE50).